Reading from the N-terminus, the 490-residue chain is Interferon-induced protein with tetratricopeptide repeats 3 (490 aa).

8 TPR repeats span residues alanine 51 to glutamate 84, leucine 94 to phenylalanine 127, serine 136 to asparagine 169, phenylalanine 172 to asparagine 206, glutamine 207 to glutamine 240, threonine 241 to asparagine 274, proline 415 to aspartate 448, and proline 450 to glutamate 481. Phosphoserine is present on residues serine 203 and serine 237. The segment at serine 467–asparagine 490 is disordered. Residues alanine 474–asparagine 490 are compositionally biased toward polar residues. Serine 478 carries the post-translational modification Phosphoserine.

This sequence belongs to the IFIT family. In terms of assembly, component of an interferon-dependent multiprotein complex, at least composed of IFIT1, IFIT2 and IFIT3. Interacts with IFIT1 and IFIT2. Interacts (via N-terminus) with MAVS, TBK1, TRAF6 and RIGI. Interacts with COPS5. Expression significantly higher in peripheral blood mononuclear cells (PBMCs) and monocytes from systemic lupus erythematosus (SLE) patients than in those from healthy individuals (at protein level). Spleen, lung, leukocytes, lymph nodes, placenta, bone marrow and fetal liver.

It is found in the cytoplasm. The protein localises to the mitochondrion. Functionally, IFN-induced antiviral protein which acts as an inhibitor of cellular as well as viral processes, cell migration, proliferation, signaling, and viral replication. Enhances MAVS-mediated host antiviral responses by serving as an adapter bridging TBK1 to MAVS which leads to the activation of TBK1 and phosphorylation of IRF3 and phosphorylated IRF3 translocates into nucleus to promote antiviral gene transcription. Exhibits an antiproliferative activity via the up-regulation of cell cycle negative regulators CDKN1A/p21 and CDKN1B/p27. Normally, CDKN1B/p27 turnover is regulated by COPS5, which binds CDKN1B/p27 in the nucleus and exports it to the cytoplasm for ubiquitin-dependent degradation. IFIT3 sequesters COPS5 in the cytoplasm, thereby increasing nuclear CDKN1B/p27 protein levels. Up-regulates CDKN1A/p21 by down-regulating MYC, a repressor of CDKN1A/p21. Can negatively regulate the apoptotic effects of IFIT2. The polypeptide is Interferon-induced protein with tetratricopeptide repeats 3 (IFIT3) (Homo sapiens (Human)).